Here is a 481-residue protein sequence, read N- to C-terminus: UDP-glucose 6-dehydrogenase 1 (481 aa).

NAD(+)-binding positions include 8-13 (GAGYVG), Asp-33, Arg-38, 86-90 (VNTPT), 127-128 (ST), and Glu-162. Substrate contacts are provided by residues 158–162 (EFLAE), 217–224 (KLAANAFL), and 257–270 (RIGA…VGFG). The Nucleophile role is filled by Cys-273. Position 273 to 276 (273 to 276 (CFQK)) interacts with NAD(+). A substrate-binding site is contributed by 335-336 (FK). NAD(+) is bound at residue Arg-343. Ser-394 is subject to Phosphoserine. Residue Arg-448 coordinates substrate.

It belongs to the UDP-glucose/GDP-mannose dehydrogenase family.

It catalyses the reaction UDP-alpha-D-glucose + 2 NAD(+) + H2O = UDP-alpha-D-glucuronate + 2 NADH + 3 H(+). It participates in nucleotide-sugar biosynthesis; UDP-alpha-D-glucuronate biosynthesis; UDP-alpha-D-glucuronate from UDP-alpha-D-glucose: step 1/1. Functionally, involved in the biosynthesis of UDP-glucuronic acid (UDP-GlcA), providing nucleotide sugars for cell-wall polymers. In Oryza sativa subsp. japonica (Rice), this protein is UDP-glucose 6-dehydrogenase 1 (UGD1).